Reading from the N-terminus, the 2455-residue chain is Ectopic P granules protein 5 homolog (2455 aa).

Residues Met-1–Asn-42 are disordered. Position 44 is a phosphoserine (Ser-44). The tract at residues Val-77 to Thr-105 is disordered. The segment covering Gln-80–Ala-97 has biased composition (low complexity). Ser-467 carries the phosphoserine modification.

Belongs to the EPG5 family.

It localises to the cytoplasm. The protein localises to the perinuclear region. The protein resides in the lysosome. Involved in autophagy. Plays a role in late steps of autophagy. This Drosophila melanogaster (Fruit fly) protein is Ectopic P granules protein 5 homolog.